The sequence spans 195 residues: Imidazoleglycerol-phosphate dehydratase (195 aa).

It belongs to the imidazoleglycerol-phosphate dehydratase family.

It is found in the cytoplasm. The enzyme catalyses D-erythro-1-(imidazol-4-yl)glycerol 3-phosphate = 3-(imidazol-4-yl)-2-oxopropyl phosphate + H2O. It participates in amino-acid biosynthesis; L-histidine biosynthesis; L-histidine from 5-phospho-alpha-D-ribose 1-diphosphate: step 6/9. This chain is Imidazoleglycerol-phosphate dehydratase, found in Campylobacter concisus (strain 13826).